Reading from the N-terminus, the 251-residue chain is Ubiquinone/menaquinone biosynthesis C-methyltransferase UbiE (251 aa).

Residues T74, D95, 123 to 124 (NA), and S140 each bind S-adenosyl-L-methionine.

It belongs to the class I-like SAM-binding methyltransferase superfamily. MenG/UbiE family.

The catalysed reaction is a 2-demethylmenaquinol + S-adenosyl-L-methionine = a menaquinol + S-adenosyl-L-homocysteine + H(+). It catalyses the reaction a 2-methoxy-6-(all-trans-polyprenyl)benzene-1,4-diol + S-adenosyl-L-methionine = a 5-methoxy-2-methyl-3-(all-trans-polyprenyl)benzene-1,4-diol + S-adenosyl-L-homocysteine + H(+). The protein operates within quinol/quinone metabolism; menaquinone biosynthesis; menaquinol from 1,4-dihydroxy-2-naphthoate: step 2/2. Its pathway is cofactor biosynthesis; ubiquinone biosynthesis. In terms of biological role, methyltransferase required for the conversion of demethylmenaquinol (DMKH2) to menaquinol (MKH2) and the conversion of 2-polyprenyl-6-methoxy-1,4-benzoquinol (DDMQH2) to 2-polyprenyl-3-methyl-6-methoxy-1,4-benzoquinol (DMQH2). The polypeptide is Ubiquinone/menaquinone biosynthesis C-methyltransferase UbiE (Escherichia coli O9:H4 (strain HS)).